The sequence spans 141 residues: AsCystatin (141 aa).

An N-terminal signal peptide occupies residues 1–26 (MVHSQLPVAAPLRLLCALLLLPLATM). Positions 29-129 (GGLSPRSVTD…CRFQVWSCPW (101 aa)) constitute a Cystatin domain. The short motif at 73–77 (QVVTG) is the Secondary area of contact element. Intrachain disulfides connect C91–C107 and C120–C140.

Belongs to the cystatin family. In terms of tissue distribution, expressed at a low level by the venom gland (at protein level).

The protein resides in the secreted. Recombinant AsCystatin inhibits various C1 cysteine proteases including cathepsin L (Ki is 0.89 pM), papain (Ki is 1.74 pM) and cathepsin B (Ki is 0.69 nM). This activity has also been observed in the crude venom. This protein has no toxic activity and its function in the venom is unknown. It may play a role as a housekeeping or regulatory protein. The polypeptide is AsCystatin (Austrelaps superbus (Lowland copperhead snake)).